We begin with the raw amino-acid sequence, 508 residues long: ATP synthase subunit alpha, mitochondrial (508 aa).

171–178 (GDRQTGKT) is a binding site for ATP.

It belongs to the ATPase alpha/beta chains family. As to quaternary structure, F-type ATPases have 2 components, CF(1) - the catalytic core - and CF(0) - the membrane proton channel. CF(1) has five subunits: alpha(3), beta(3), gamma(1), delta(1), epsilon(1). CF(0) has three main subunits: a, b and c.

Its subcellular location is the mitochondrion. It localises to the mitochondrion inner membrane. Its function is as follows. Mitochondrial membrane ATP synthase (F(1)F(0) ATP synthase or Complex V) produces ATP from ADP in the presence of a proton gradient across the membrane which is generated by electron transport complexes of the respiratory chain. F-type ATPases consist of two structural domains, F(1) - containing the extramembraneous catalytic core, and F(0) - containing the membrane proton channel, linked together by a central stalk and a peripheral stalk. During catalysis, ATP synthesis in the catalytic domain of F(1) is coupled via a rotary mechanism of the central stalk subunits to proton translocation. Subunits alpha and beta form the catalytic core in F(1). Rotation of the central stalk against the surrounding alpha(3)beta(3) subunits leads to hydrolysis of ATP in three separate catalytic sites on the beta subunits. Subunit alpha does not bear the catalytic high-affinity ATP-binding sites. This is ATP synthase subunit alpha, mitochondrial (ATPA) from Phaseolus vulgaris (Kidney bean).